The chain runs to 202 residues: Matrix protein (202 aa).

Residues 12 to 33 (RDEDTQKPSPVSAPPDDDDLWL) are disordered. The short motif at 35 to 38 (PPEY) is the PPXY motif element. An essential for glycoprotein binding region spans residues 115–151 (KLRRTLIFQWADSRGPLEGEELEYSQEITWDDDTEFV).

This sequence belongs to the lyssavirus matrix protein family. In terms of assembly, homomultimer. Interacts with nucleoprotein and with the cytoplasmic domain of glycoprotein. Interacts with host ATP6V1A; this interaction plays an important role in virion uncoating after viral entry.

Its subcellular location is the virion membrane. The protein resides in the host endomembrane system. It is found in the host cytoplasm. Its function is as follows. Plays a major role in assembly, budding and uncoating of virion after membrane fusion. Completely covers the ribonucleoprotein coil and keep it in condensed bullet-shaped form. Inhibits viral transcription and stimulates replication. Plays a major role in early induction of TRAIL-mediated apoptosis in infected neurons. Inhibits the integrated stress response (ISR) in the infected cell by blocking the formation of stress granules. The sequence is that of Matrix protein (M) from Rabies virus (strain PM1503/AVO1) (RABV).